A 270-amino-acid chain; its full sequence is Elongation factor Ts (270 aa).

The involved in Mg(2+) ion dislocation from EF-Tu stretch occupies residues 77-80; the sequence is TDFV.

It belongs to the EF-Ts family.

The protein localises to the cytoplasm. Its function is as follows. Associates with the EF-Tu.GDP complex and induces the exchange of GDP to GTP. It remains bound to the aminoacyl-tRNA.EF-Tu.GTP complex up to the GTP hydrolysis stage on the ribosome. In Nocardioides sp. (strain ATCC BAA-499 / JS614), this protein is Elongation factor Ts.